Reading from the N-terminus, the 200-residue chain is MAFRSAGTLMTEFNAAFVPPALMPGYKGHVPGVASSFGSSYGNTTFKYFQDLRNTGLEKSYALLSGGCFPTIFSPNSPLVLTDNSQNWDRWLHQPTYSRSNQDNGRTTELTNFYKTVQQQRKYYQDKTGILSRVPYFVLPVKEPDRYPLPTDLPPLSEKSKWNLLRLSPDYKRTYQTFPSGKRVSSQERQRRDLYFEFRA.

The protein belongs to the CIMIP2 family. As to quaternary structure, microtubule inner protein component of sperm flagellar doublet microtubules.

It is found in the cytoplasm. Its subcellular location is the cytoskeleton. The protein localises to the cilium axoneme. It localises to the flagellum axoneme. Functionally, microtubule inner protein (MIP) part of the dynein-decorated doublet microtubules (DMTs) in cilia axoneme, which is required for motile cilia beating. Binds to the intra-tubulin interfaces. The chain is Ciliary microtubule inner protein 2C (Cimip2c) from Mus musculus (Mouse).